The following is an 880-amino-acid chain: Alanine--tRNA ligase (880 aa).

Residues histidine 567, histidine 571, cysteine 669, and histidine 673 each coordinate Zn(2+).

It belongs to the class-II aminoacyl-tRNA synthetase family. It depends on Zn(2+) as a cofactor.

It localises to the cytoplasm. The enzyme catalyses tRNA(Ala) + L-alanine + ATP = L-alanyl-tRNA(Ala) + AMP + diphosphate. Its function is as follows. Catalyzes the attachment of alanine to tRNA(Ala) in a two-step reaction: alanine is first activated by ATP to form Ala-AMP and then transferred to the acceptor end of tRNA(Ala). Also edits incorrectly charged Ser-tRNA(Ala) and Gly-tRNA(Ala) via its editing domain. In Bacillus thuringiensis (strain Al Hakam), this protein is Alanine--tRNA ligase.